A 362-amino-acid chain; its full sequence is Myricetin 3'-O-methyltransferase 4 (362 aa).

D229 contributes to the S-adenosyl-L-methionine binding site. Catalysis depends on H267, which acts as the Proton acceptor.

This sequence belongs to the class I-like SAM-binding methyltransferase superfamily. Cation-independent O-methyltransferase family. In terms of assembly, homodimer. In terms of tissue distribution, mainly expressed in stem and petiole trichomes.

It catalyses the reaction myricetin + S-adenosyl-L-methionine = laricitrin + S-adenosyl-L-homocysteine + H(+). It functions in the pathway flavonoid metabolism. Its function is as follows. Flavonoid 3'-O-methyltransferase involved in the biosynthesis of polymethoxylated flavonoids natural products such as myricetin derivatives, aroma compounds possessing antioxidant properties and exhibiting pharmacological activities such as anti-carcinogen, anti-viral, anti-thrombotic, anti-diabetic, anti-atherosclerotic, and anti-inflammatory effects. Catalyzes S-adenosylmethionine-dependent regioselective 3'-O-methylation of flavonoids; active on various hydroxylated flavonoid substrates, including myricetin, thus producing 3'-methyl myricetin (laricitrin). The chain is Myricetin 3'-O-methyltransferase 4 from Solanum lycopersicum (Tomato).